The following is a 302-amino-acid chain: tRNA dimethylallyltransferase (302 aa).

Residue 7-14 (GPTASGKS) participates in ATP binding. 9–14 (TASGKS) contacts substrate. Interaction with substrate tRNA regions lie at residues 32–35 (DSMQ) and 156–160 (QRILR).

This sequence belongs to the IPP transferase family. In terms of assembly, monomer. The cofactor is Mg(2+).

It carries out the reaction adenosine(37) in tRNA + dimethylallyl diphosphate = N(6)-dimethylallyladenosine(37) in tRNA + diphosphate. In terms of biological role, catalyzes the transfer of a dimethylallyl group onto the adenine at position 37 in tRNAs that read codons beginning with uridine, leading to the formation of N6-(dimethylallyl)adenosine (i(6)A). This Beijerinckia indica subsp. indica (strain ATCC 9039 / DSM 1715 / NCIMB 8712) protein is tRNA dimethylallyltransferase.